We begin with the raw amino-acid sequence, 501 residues long: Symplectin (501 aa).

A CN hydrolase domain is found at 20–287 (PKTDMETREE…SKLLVAEILP (268 aa)). Residue glutamate 60 is the Proton acceptor of the active site. The active-site Proton donor is the lysine 163. Residue cysteine 196 is the Nucleophile of the active site. Residue cysteine 390 is modified to S-(coelenterazin-3a-yl)cysteine.

The protein belongs to the carbon-nitrogen hydrolase superfamily. BTD/VNN family. In terms of tissue distribution, photogenic gland (at protein level).

Its function is as follows. Monovalent ion-dependent bioluminescence photoprotein. Displays an emission peak at 470 nm (blue light). Trace amounts of monovalent ion trigger the intramolecular oxidation of the chromophore, didehydrocoelenterazine, with the emission of light. The sequence is that of Symplectin from Sthenoteuthis oualaniensis (Purpleback flying squid).